The sequence spans 110 residues: MKGRRPSHRRQLIPPLLTGLRVKVLAHSDPSLEGLEGWVVVEEARSLRILTLEGRVSTVLKDLAVIEVEAPGGEYIRISGRVLIGNPLDRVKEYRWRVSRRCRSSSRLKT.

It belongs to the eukaryotic/archaeal RNase P protein component 1 family. As to quaternary structure, consists of a catalytic RNA component and at least 4-5 protein subunits.

The protein localises to the cytoplasm. The enzyme catalyses Endonucleolytic cleavage of RNA, removing 5'-extranucleotides from tRNA precursor.. Functionally, part of ribonuclease P, a protein complex that generates mature tRNA molecules by cleaving their 5'-ends. The chain is Ribonuclease P protein component 1 from Aeropyrum pernix (strain ATCC 700893 / DSM 11879 / JCM 9820 / NBRC 100138 / K1).